Consider the following 712-residue polypeptide: Glucans biosynthesis glucosyltransferase H (712 aa).

A run of 6 helical transmembrane segments spans residues 57–77 (LAIM…MYQV), 89–109 (IVLA…VSAL), 408–428 (GIGS…GILI), 462–482 (FAGT…LVVI), 552–572 (YAAP…VSWP), and 573–593 (LLLW…VALL).

It belongs to the glycosyltransferase 2 family. OpgH subfamily.

Its subcellular location is the cell inner membrane. Its pathway is glycan metabolism; osmoregulated periplasmic glucan (OPG) biosynthesis. Involved in the biosynthesis of osmoregulated periplasmic glucans (OPGs). This is Glucans biosynthesis glucosyltransferase H from Rhodopseudomonas palustris (strain BisA53).